A 142-amino-acid chain; its full sequence is Large ribosomal subunit protein uL13 (142 aa).

The protein belongs to the universal ribosomal protein uL13 family. In terms of assembly, part of the 50S ribosomal subunit.

Its function is as follows. This protein is one of the early assembly proteins of the 50S ribosomal subunit, although it is not seen to bind rRNA by itself. It is important during the early stages of 50S assembly. The sequence is that of Large ribosomal subunit protein uL13 from Lachnospira eligens (strain ATCC 27750 / DSM 3376 / VPI C15-48 / C15-B4) (Eubacterium eligens).